Consider the following 309-residue polypeptide: Small ribosomal subunit biogenesis GTPase RsgA (309 aa).

The CP-type G domain maps to 88-247; that stretch reads KNLITRPPVA…IADTPGFNKP (160 aa). GTP-binding positions include 137-140 and 189-197; these read TKRD and GPSGVGKSS. Zn(2+) is bound by residues Cys-272, Cys-277, His-279, and Cys-285.

The protein belongs to the TRAFAC class YlqF/YawG GTPase family. RsgA subfamily. Monomer. Associates with 30S ribosomal subunit, binds 16S rRNA. Requires Zn(2+) as cofactor.

It is found in the cytoplasm. Functionally, one of several proteins that assist in the late maturation steps of the functional core of the 30S ribosomal subunit. Helps release RbfA from mature subunits. May play a role in the assembly of ribosomal proteins into the subunit. Circularly permuted GTPase that catalyzes slow GTP hydrolysis, GTPase activity is stimulated by the 30S ribosomal subunit. The protein is Small ribosomal subunit biogenesis GTPase RsgA of Prochlorococcus marinus (strain SARG / CCMP1375 / SS120).